The primary structure comprises 137 residues: Large ribosomal subunit protein uL16 (137 aa).

The protein belongs to the universal ribosomal protein uL16 family. As to quaternary structure, part of the 50S ribosomal subunit.

In terms of biological role, binds 23S rRNA and is also seen to make contacts with the A and possibly P site tRNAs. This Wolbachia pipientis subsp. Culex pipiens (strain wPip) protein is Large ribosomal subunit protein uL16.